We begin with the raw amino-acid sequence, 35 residues long: Turgencin-B (35 aa).

Methionine sulfoxide is present on residues M5 and M9. 3 disulfide bridges follow: C7-C31, C11-C27, and C16-C24. G35 bears the Glycine amide mark.

Oxidation likely reduces antimicrobial activity against Gram-positive bacteria and Gram-negative bacteria.

The protein resides in the secreted. Functionally, has antimicrobial activity against Gram-positive bacteria (C.glutamicum ATCC 13032 (MIC=1.6 uM) and B.subtilis ATCC 23857 (MIC=1.6 uM)) and Gram-negative bacteria (E.coli ATCC 25922 (MIC=12.5 uM) and P.aeruginosa ATCC 27853 (MIC=25.0 uM)). Displays very low activity against the Gram-positive bacteria S.aureus ATCC 9144 (MIC&gt;100 uM). This is Turgencin-B from Synoicum turgens (Colonial ascidian).